A 161-amino-acid chain; its full sequence is Ribonuclease P protein component 2 (161 aa).

It belongs to the eukaryotic/archaeal RNase P protein component 2 family. In terms of assembly, consists of a catalytic RNA component and at least 4-5 protein subunits.

Its subcellular location is the cytoplasm. It carries out the reaction Endonucleolytic cleavage of RNA, removing 5'-extranucleotides from tRNA precursor.. Functionally, part of ribonuclease P, a protein complex that generates mature tRNA molecules by cleaving their 5'-ends. This chain is Ribonuclease P protein component 2, found in Methanopyrus kandleri (strain AV19 / DSM 6324 / JCM 9639 / NBRC 100938).